The following is a 471-amino-acid chain: Putative multidrug resistance protein MdtD (471 aa).

Helical transmembrane passes span 12–32 (LWIV…VNTA), 49–69 (MIIV…GWLA), 77–97 (IFFT…QAST), 106–126 (VLQG…VMKI), 138–158 (FVTL…GVLV), 165–185 (WIFL…LCLM), 195–215 (FDLS…LALD), 220–240 (LGIS…ALLL), 263–283 (FSLG…LPFM), 286–306 (VFLQ…MIPM), 342–362 (LLFM…VLFL), 393–413 (LLSM…GLLL), and 431–451 (VFLY…LIFS).

The protein belongs to the major facilitator superfamily. TCR/Tet family.

The protein localises to the cell inner membrane. This Klebsiella pneumoniae (strain 342) protein is Putative multidrug resistance protein MdtD.